Reading from the N-terminus, the 38-residue chain is Large ribosomal subunit protein bL36 (38 aa).

Belongs to the bacterial ribosomal protein bL36 family.

The protein is Large ribosomal subunit protein bL36 of Prochlorococcus marinus (strain SARG / CCMP1375 / SS120).